Reading from the N-terminus, the 240-residue chain is Izumo sperm-egg fusion protein 3 (240 aa).

Positions 1 to 22 are cleaved as a signal peptide; the sequence is MGDLWLLLLLPLSLAAFHGVKG. The Extracellular segment spans residues 23 to 176; that stretch reads CLECDPKFIE…DDPKKAESRE (154 aa). Residues 177–197 form a helical membrane-spanning segment; the sequence is IGLFLILLAEGVILGGVLLLF. Residues 198–240 are Cytoplasmic-facing; it reads HFCISHQRKMKAIRRSLKTYLEKKLEELMGIKDEKEKDFRGRE.

Belongs to the Izumo family. Monomer and homodimer.

It is found in the cell membrane. The polypeptide is Izumo sperm-egg fusion protein 3 (IZUMO3) (Bos taurus (Bovine)).